A 1240-amino-acid chain; its full sequence is RNA-directed RNA polymerase VP2 (1240 aa).

Residues 516–764 (LVANYINKHM…KLYALFGARI (249 aa)) form the RdRp catalytic domain.

This sequence belongs to the reoviridae RNA-directed RNA polymerase family.

The protein localises to the virion. The catalysed reaction is RNA(n) + a ribonucleoside 5'-triphosphate = RNA(n+1) + diphosphate. Its function is as follows. RNA-directed RNA polymerase that is involved in transcription and genome replication. Following infection, it catalyzes the synthesis of fully conservative plus strands. After core assembly, which consists in recruitment of one capped plus-strand for each genomic segments and polymerase complexes, the polymerase switches mode and catalyzes the synthesis of complementary minus-strands. The chain is RNA-directed RNA polymerase VP2 (S2) from Oncorhynchus keta (Chum salmon).